The chain runs to 362 residues: Peptide chain release factor 1 (362 aa).

Position 237 is an N5-methylglutamine (Gln-237).

The protein belongs to the prokaryotic/mitochondrial release factor family. Post-translationally, methylated by PrmC. Methylation increases the termination efficiency of RF1.

The protein localises to the cytoplasm. Peptide chain release factor 1 directs the termination of translation in response to the peptide chain termination codons UAG and UAA. In Marinomonas sp. (strain MWYL1), this protein is Peptide chain release factor 1.